A 744-amino-acid chain; its full sequence is Phosphoribosylformylglycinamidine synthase subunit PurL (744 aa).

Residue histidine 50 is part of the active site. ATP is bound by residues tyrosine 53 and lysine 92. Glutamate 94 lines the Mg(2+) pocket. Substrate contacts are provided by residues 95–98 and arginine 117; that span reads SHNH. Residue histidine 96 is the Proton acceptor of the active site. Aspartate 118 contributes to the Mg(2+) binding site. Residue glutamine 241 coordinates substrate. A Mg(2+)-binding site is contributed by aspartate 269. Residue 313–315 participates in substrate binding; sequence ESQ. Positions 495 and 532 each coordinate ATP. Residue asparagine 533 participates in Mg(2+) binding. Position 535 (serine 535) interacts with substrate.

This sequence belongs to the FGAMS family. Monomer. Part of the FGAM synthase complex composed of 1 PurL, 1 PurQ and 2 PurS subunits.

It is found in the cytoplasm. It catalyses the reaction N(2)-formyl-N(1)-(5-phospho-beta-D-ribosyl)glycinamide + L-glutamine + ATP + H2O = 2-formamido-N(1)-(5-O-phospho-beta-D-ribosyl)acetamidine + L-glutamate + ADP + phosphate + H(+). It functions in the pathway purine metabolism; IMP biosynthesis via de novo pathway; 5-amino-1-(5-phospho-D-ribosyl)imidazole from N(2)-formyl-N(1)-(5-phospho-D-ribosyl)glycinamide: step 1/2. Part of the phosphoribosylformylglycinamidine synthase complex involved in the purines biosynthetic pathway. Catalyzes the ATP-dependent conversion of formylglycinamide ribonucleotide (FGAR) and glutamine to yield formylglycinamidine ribonucleotide (FGAM) and glutamate. The FGAM synthase complex is composed of three subunits. PurQ produces an ammonia molecule by converting glutamine to glutamate. PurL transfers the ammonia molecule to FGAR to form FGAM in an ATP-dependent manner. PurS interacts with PurQ and PurL and is thought to assist in the transfer of the ammonia molecule from PurQ to PurL. The protein is Phosphoribosylformylglycinamidine synthase subunit PurL of Rhizobium johnstonii (strain DSM 114642 / LMG 32736 / 3841) (Rhizobium leguminosarum bv. viciae).